The following is a 491-amino-acid chain: Ketol-acid reductoisomerase (NADP(+)) (491 aa).

Positions 15–208 constitute a KARI N-terminal Rossmann domain; that stretch reads AQLGKCRFMG…GGHRAGVLES (194 aa). NADP(+)-binding positions include 45–48, Arg-68, Arg-76, Ser-78, and 108–110; these read CGAQ and DKQ. His-132 is an active-site residue. An NADP(+)-binding site is contributed by Gly-158. KARI C-terminal knotted domains lie at 209 to 344 and 345 to 484; these read SFVA…TAPQ and YEGK…MTDM. Mg(2+)-binding residues include Asp-217, Glu-221, Glu-389, and Glu-393. Ser-414 contacts substrate.

Belongs to the ketol-acid reductoisomerase family. The cofactor is Mg(2+).

It catalyses the reaction (2R)-2,3-dihydroxy-3-methylbutanoate + NADP(+) = (2S)-2-acetolactate + NADPH + H(+). The catalysed reaction is (2R,3R)-2,3-dihydroxy-3-methylpentanoate + NADP(+) = (S)-2-ethyl-2-hydroxy-3-oxobutanoate + NADPH + H(+). It participates in amino-acid biosynthesis; L-isoleucine biosynthesis; L-isoleucine from 2-oxobutanoate: step 2/4. Its pathway is amino-acid biosynthesis; L-valine biosynthesis; L-valine from pyruvate: step 2/4. Its function is as follows. Involved in the biosynthesis of branched-chain amino acids (BCAA). Catalyzes an alkyl-migration followed by a ketol-acid reduction of (S)-2-acetolactate (S2AL) to yield (R)-2,3-dihydroxy-isovalerate. In the isomerase reaction, S2AL is rearranged via a Mg-dependent methyl migration to produce 3-hydroxy-3-methyl-2-ketobutyrate (HMKB). In the reductase reaction, this 2-ketoacid undergoes a metal-dependent reduction by NADPH to yield (R)-2,3-dihydroxy-isovalerate. The sequence is that of Ketol-acid reductoisomerase (NADP(+)) from Salmonella typhimurium (strain LT2 / SGSC1412 / ATCC 700720).